Here is a 450-residue protein sequence, read N- to C-terminus: 23S rRNA (uracil(1939)-C(5))-methyltransferase RlmD (450 aa).

The region spanning 12 to 70 is the TRAM domain; it reads SKQLSAKLSLNVDQLDHLGAGIAQYQGKVVFIPGALPDETVTVQLTEQKKNYARAKLIK. The [4Fe-4S] cluster site is built by C83, C89, C92, and C171. Q283, F312, N317, E333, D360, and D380 together coordinate S-adenosyl-L-methionine. C406 functions as the Nucleophile in the catalytic mechanism.

Belongs to the class I-like SAM-binding methyltransferase superfamily. RNA M5U methyltransferase family. RlmD subfamily.

The catalysed reaction is uridine(1939) in 23S rRNA + S-adenosyl-L-methionine = 5-methyluridine(1939) in 23S rRNA + S-adenosyl-L-homocysteine + H(+). Catalyzes the formation of 5-methyl-uridine at position 1939 (m5U1939) in 23S rRNA. The sequence is that of 23S rRNA (uracil(1939)-C(5))-methyltransferase RlmD from Shewanella sp. (strain W3-18-1).